Consider the following 1347-residue polypeptide: Spermatogenesis-associated protein 31A7 (1347 aa).

The helical transmembrane segment at Pro-23–Leu-43 threads the bilayer. 7 disordered regions span residues Pro-55–Pro-88, Gly-106–Thr-233, Gln-374–Lys-397, Asp-628–Lys-658, Arg-900–Val-955, Val-1084–Ser-1161, and Lys-1313–His-1335. Residues Gly-60 to Arg-82 are compositionally biased toward basic residues. Over residues Leu-165–Val-178 the composition is skewed to polar residues. Residues Pro-198–Pro-211 are compositionally biased toward pro residues. Polar residues-rich tracts occupy residues Pro-631 to Glu-651 and Leu-927 to Ala-948. Basic and acidic residues-rich tracts occupy residues His-1108–Gly-1127 and Arg-1137–Glu-1146.

The protein belongs to the SPATA31 family.

Its subcellular location is the membrane. Its function is as follows. May play a role in spermatogenesis. In Homo sapiens (Human), this protein is Spermatogenesis-associated protein 31A7.